The primary structure comprises 77 residues: Bradykinin-potentiating peptide (77 aa).

Residues 1 to 22 (MNKKTLLVIFIVTLLIADEVNS) form the signal peptide. A propeptide spanning residues 74–77 (RRRR) is cleaved from the precursor.

This sequence belongs to the non-disulfide-bridged peptide (NDBP) superfamily. Long chain multifunctional peptide (group 2) family. Expressed by the venom gland.

It is found in the secreted. Its function is as follows. Antimicrobial peptide. May also inhibit angiotensin-converting enzyme (ACE) and potentiate bradykinin (BK). The sequence is that of Bradykinin-potentiating peptide from Tityus discrepans (Venezuelan scorpion).